The primary structure comprises 378 residues: Biotin synthase, mitochondrial (378 aa).

A mitochondrion-targeting transit peptide spans 1–26; it reads MMLVRSVFRSQLRPSVSGGLQSASCY. The region spanning 79–308 is the Radical SAM core domain; that stretch reads REVQQCTLLS…KAMVRLSAGR (230 aa). Cys94, Cys98, and Cys101 together coordinate [4Fe-4S] cluster. [2Fe-2S] cluster-binding residues include Cys138, Cys171, Cys231, and Arg303. The disordered stretch occupies residues 357–378; it reads PPSFSEDDSESENCEKVASASH.

The protein belongs to the radical SAM superfamily. Biotin synthase family. [4Fe-4S] cluster serves as cofactor. The cofactor is [2Fe-2S] cluster.

It localises to the mitochondrion. It catalyses the reaction (4R,5S)-dethiobiotin + (sulfur carrier)-SH + 2 reduced [2Fe-2S]-[ferredoxin] + 2 S-adenosyl-L-methionine = (sulfur carrier)-H + biotin + 2 5'-deoxyadenosine + 2 L-methionine + 2 oxidized [2Fe-2S]-[ferredoxin]. Its pathway is cofactor biosynthesis; biotin biosynthesis; biotin from 7,8-diaminononanoate: step 2/2. This chain is Biotin synthase, mitochondrial (BIO2), found in Arabidopsis thaliana (Mouse-ear cress).